Reading from the N-terminus, the 240-residue chain is MNKSGMSLIITMLLLIGTAIVIGAAYYAWSNKVFSDTTEKITPTIKSSIGNIIKPIEISTIETYYFTNLDLNGDSRITNNPEERFIQTIKLEFINNIDEDLNVNTRIYCLTPNVSWASVNIDDSSNNLLLDRDENPYNYSGQYVYFNGTVYYSSMKFYDENGKLFYAAASNGNALNTSNLLDLIDLNCPTESFLLKGNSKTDINYYILINNTKVPNTIIFEIIASTKYGDVEKKITFEIS.

The N-terminal stretch at 1 to 30 (MNKSGMSLIITMLLLIGTAIVIGAAYYAWS) is a signal peptide.

This is an uncharacterized protein from Methanocaldococcus jannaschii (strain ATCC 43067 / DSM 2661 / JAL-1 / JCM 10045 / NBRC 100440) (Methanococcus jannaschii).